A 389-amino-acid polypeptide reads, in one-letter code: Protein DDI1 homolog 1 (389 aa).

Residues 109–132 (SSSSAQSAQRTRRVEQDDEGEKSM) are disordered. The active site involves D261.

The protein belongs to the DDI1 family. Expressed in most tissues.

The protein localises to the cytoplasm. It is found in the nucleus. In terms of biological role, aspartic protease. Required for the cleavage and activation of transcription factors such as isoform a of the transcription factor skn-1, which in turn regulates the expression of proteasomal subunits such as rpt-3. Plays a key role in the degradation of the potassium channel slo-1, perhaps acting directly, in cleaving slo-1 upstream of the ER-associated degradation pathway (ERAD), and also indirectly, via activation of the transcription factor skn-1, which mediates proteasomal homeostasis. This Caenorhabditis elegans protein is Protein DDI1 homolog 1.